Consider the following 78-residue polypeptide: Large ribosomal subunit protein eL20 (78 aa).

The protein belongs to the eukaryotic ribosomal protein eL20 family. Part of the 50S ribosomal subunit. Binds 23S rRNA.

This is Large ribosomal subunit protein eL20 from Pyrobaculum islandicum (strain DSM 4184 / JCM 9189 / GEO3).